Consider the following 512-residue polypeptide: Mannose-1-phosphate guanylyltransferase (512 aa).

This sequence belongs to the mannose-6-phosphate isomerase type 2 family.

It catalyses the reaction alpha-D-mannose 1-phosphate + GTP + H(+) = GDP-alpha-D-mannose + diphosphate. The polypeptide is Mannose-1-phosphate guanylyltransferase (noeJ) (Sinorhizobium fredii (strain NBRC 101917 / NGR234)).